Here is a 246-residue protein sequence, read N- to C-terminus: Large ribosomal subunit protein uL3 (246 aa).

Gln-151 carries the post-translational modification N5-methylglutamine.

It belongs to the universal ribosomal protein uL3 family. Part of the 50S ribosomal subunit. Forms a cluster with proteins L14 and L19. In terms of processing, methylated by PrmB.

One of the primary rRNA binding proteins, it binds directly near the 3'-end of the 23S rRNA, where it nucleates assembly of the 50S subunit. The sequence is that of Large ribosomal subunit protein uL3 from Bartonella quintana (strain Toulouse) (Rochalimaea quintana).